A 396-amino-acid chain; its full sequence is Lipid-A-disaccharide synthase (396 aa).

This sequence belongs to the LpxB family.

The enzyme catalyses a lipid X + a UDP-2-N,3-O-bis[(3R)-3-hydroxyacyl]-alpha-D-glucosamine = a lipid A disaccharide + UDP + H(+). Its pathway is bacterial outer membrane biogenesis; LPS lipid A biosynthesis. Condensation of UDP-2,3-diacylglucosamine and 2,3-diacylglucosamine-1-phosphate to form lipid A disaccharide, a precursor of lipid A, a phosphorylated glycolipid that anchors the lipopolysaccharide to the outer membrane of the cell. The protein is Lipid-A-disaccharide synthase of Rhodopseudomonas palustris (strain BisB18).